We begin with the raw amino-acid sequence, 250 residues long: Triosephosphate isomerase (250 aa).

Residue 9 to 11 (NWK) participates in substrate binding. The active-site Electrophile is the His-96. The active-site Proton acceptor is the Glu-166. Substrate-binding positions include Gly-172, Ser-212, and 233-234 (GG).

It belongs to the triosephosphate isomerase family. In terms of assembly, homodimer.

The protein localises to the cytoplasm. The catalysed reaction is D-glyceraldehyde 3-phosphate = dihydroxyacetone phosphate. It functions in the pathway carbohydrate biosynthesis; gluconeogenesis. Its pathway is carbohydrate degradation; glycolysis; D-glyceraldehyde 3-phosphate from glycerone phosphate: step 1/1. Functionally, involved in the gluconeogenesis. Catalyzes stereospecifically the conversion of dihydroxyacetone phosphate (DHAP) to D-glyceraldehyde-3-phosphate (G3P). This is Triosephosphate isomerase from Chlorobium phaeobacteroides (strain BS1).